The primary structure comprises 347 residues: KRR1 small subunit processome component homolog (347 aa).

Residues 124 to 194 (GCDIIKIGNL…VRDIVLETMN (71 aa)) enclose the KH domain. Residues 231–246 (NKNLSKRKQPKVKKPK) show a composition bias toward basic residues. The interval 231–347 (NKNLSKRKQP…LLKANKKSKS (117 aa)) is disordered. Residues 271 to 304 (FLNKEQKQAKRQQERQTKQAEAAKKQDERRNKDF) adopt a coiled-coil conformation. Composition is skewed to basic and acidic residues over residues 272–303 (LNKE…RNKD) and 318–329 (KANDNDSSDSRV). Over residues 337–347 (KLLKANKKSKS) the composition is skewed to basic residues.

This sequence belongs to the KRR1 family. As to quaternary structure, monomer. Component of the ribosomal small subunit (SSU) processome.

The protein resides in the nucleus. Its subcellular location is the nucleolus. Functionally, required for 40S ribosome biogenesis. Involved in nucleolar processing of pre-18S ribosomal RNA and ribosome assembly. Binds to RNA. Required for female germline development, cell viability during eye development and for survival of dividing cells and epithelial cells during early wing disk development. The polypeptide is KRR1 small subunit processome component homolog (Drosophila willistoni (Fruit fly)).